Here is a 116-residue protein sequence, read N- to C-terminus: Photosystem II reaction center Psb28 protein (116 aa).

Belongs to the Psb28 family. As to quaternary structure, part of the photosystem II complex.

Its subcellular location is the plastid. The protein localises to the chloroplast thylakoid membrane. In Guillardia theta (Cryptophyte), this protein is Photosystem II reaction center Psb28 protein.